The primary structure comprises 711 residues: Ribosomal RNA large subunit methyltransferase K/L (711 aa).

The region spanning 43 to 154 (LGYRITLWSR…RGEITIGINF (112 aa)) is the THUMP domain.

The protein belongs to the methyltransferase superfamily. RlmKL family.

It is found in the cytoplasm. It catalyses the reaction guanosine(2445) in 23S rRNA + S-adenosyl-L-methionine = N(2)-methylguanosine(2445) in 23S rRNA + S-adenosyl-L-homocysteine + H(+). The catalysed reaction is guanosine(2069) in 23S rRNA + S-adenosyl-L-methionine = N(2)-methylguanosine(2069) in 23S rRNA + S-adenosyl-L-homocysteine + H(+). Functionally, specifically methylates the guanine in position 2445 (m2G2445) and the guanine in position 2069 (m7G2069) of 23S rRNA. The chain is Ribosomal RNA large subunit methyltransferase K/L from Shewanella pealeana (strain ATCC 700345 / ANG-SQ1).